A 100-amino-acid chain; its full sequence is uncharacterized protein (100 aa).

The protein to M.jannaschii MJ1155.1.

This is an uncharacterized protein from Archaeoglobus fulgidus (strain ATCC 49558 / DSM 4304 / JCM 9628 / NBRC 100126 / VC-16).